A 416-amino-acid chain; its full sequence is Keratin, type I cuticular Ha1 (416 aa).

The segment at 1-56 is head; the sequence is MPYNFCLPSLSCRTSCSSRPCVPPSCHSCTLPGACNIPANVSNCNWFCEGSFNGSE. Residues 56 to 367 enclose the IF rod domain; that stretch reads EKETMQFLND…SLLESEDCNL (312 aa). Residues 57–91 form a coil 1A region; the sequence is KETMQFLNDRLASYLEKVRQLERDNAELENLIRER. The linker 1 stretch occupies residues 92–102; it reads SQQQEPLLCPS. The interval 103 to 203 is coil 1B; the sequence is YQSYFKTIEE…HEQEVNTLRC (101 aa). Residues 204-219 are linker 12; that stretch reads QLGDRLNVEVDAAPTV. The interval 220–363 is coil 2; sequence DLNRVLNETR…NTYRSLLESE (144 aa). Residues 364-416 are tail; sequence DCNLPSNPCATTNACSKPIGPCLSNPCTPCVPPAPCTPCAPRPRCGPCNSFVR.

It belongs to the intermediate filament family.

The sequence is that of Keratin, type I cuticular Ha1 (KRT31) from Pan troglodytes (Chimpanzee).